The chain runs to 513 residues: Cytochrome P450 71D445 (513 aa).

A helical; Signal-anchor for type II membrane protein transmembrane segment spans residues 12 to 28 (SEWAITSTITLLFLILL). Position 450 (Cys-450) interacts with heme.

The protein belongs to the cytochrome P450 family. Requires heme as cofactor. Expressed in mature seeds.

The protein resides in the membrane. It catalyses the reaction (-)-casbene + reduced [NADPH--hemoprotein reductase] + O2 = 8-hydroxycasbene + oxidized [NADPH--hemoprotein reductase] + H2O + H(+). The catalysed reaction is 4-hydroxycasbene + reduced [NADPH--hemoprotein reductase] + O2 = 4,8-dihydroxycasbene + oxidized [NADPH--hemoprotein reductase] + H2O + H(+). The enzyme catalyses 4,8-dihydroxycasbene + reduced [NADPH--hemoprotein reductase] + O2 = 4,5,8-trihydroxycasbene + oxidized [NADPH--hemoprotein reductase] + H2O + H(+). It participates in secondary metabolite biosynthesis; terpenoid biosynthesis. Involved in the biosynthesis of macrocyclic lathyrane type diterpenoids (also called Euphorbia factors) natural products, including the cyclization route from casbene to jolkinol C, a precursor for ingenol mebutate that is used to treat actinic keratosis, a precancerous skin condition. Catalyzes the hydroxylation of (-)-casbene and 4-hydroxycasbene to produce 8-hydroxycasbene and 4,8-dihydroxycasbene, respectively. Also mediates the formation of 4-hydroxy-8-ketocasbene from 4,8-dihydroxycasbene. Together with ADH1, triggers the biosynthesis of 8-ketocasbene from 8-hydroxycasbene. This Euphorbia lathyris (Caper spurge) protein is Cytochrome P450 71D445.